We begin with the raw amino-acid sequence, 352 residues long: UDP-3-O-acylglucosamine N-acyltransferase (352 aa).

His-244 functions as the Proton acceptor in the catalytic mechanism.

This sequence belongs to the transferase hexapeptide repeat family. LpxD subfamily. As to quaternary structure, homotrimer.

The enzyme catalyses a UDP-3-O-[(3R)-3-hydroxyacyl]-alpha-D-glucosamine + a (3R)-hydroxyacyl-[ACP] = a UDP-2-N,3-O-bis[(3R)-3-hydroxyacyl]-alpha-D-glucosamine + holo-[ACP] + H(+). Its pathway is bacterial outer membrane biogenesis; LPS lipid A biosynthesis. Functionally, catalyzes the N-acylation of UDP-3-O-acylglucosamine using 3-hydroxyacyl-ACP as the acyl donor. Is involved in the biosynthesis of lipid A, a phosphorylated glycolipid that anchors the lipopolysaccharide to the outer membrane of the cell. In Leptospira biflexa serovar Patoc (strain Patoc 1 / Ames), this protein is UDP-3-O-acylglucosamine N-acyltransferase.